We begin with the raw amino-acid sequence, 364 residues long: Aminomethyltransferase (364 aa).

The protein belongs to the GcvT family. The glycine cleavage system is composed of four proteins: P, T, L and H.

It catalyses the reaction N(6)-[(R)-S(8)-aminomethyldihydrolipoyl]-L-lysyl-[protein] + (6S)-5,6,7,8-tetrahydrofolate = N(6)-[(R)-dihydrolipoyl]-L-lysyl-[protein] + (6R)-5,10-methylene-5,6,7,8-tetrahydrofolate + NH4(+). In terms of biological role, the glycine cleavage system catalyzes the degradation of glycine. The polypeptide is Aminomethyltransferase (Escherichia coli O81 (strain ED1a)).